The sequence spans 506 residues: ATP synthase subunit alpha (506 aa).

Residue 170 to 177 (GDRQTGKT) participates in ATP binding.

Belongs to the ATPase alpha/beta chains family. As to quaternary structure, F-type ATPases have 2 components, CF(1) - the catalytic core - and CF(0) - the membrane proton channel. CF(1) has five subunits: alpha(3), beta(3), gamma(1), delta(1), epsilon(1). CF(0) has four main subunits: a(1), b(1), b'(1) and c(9-12).

It localises to the cellular thylakoid membrane. It carries out the reaction ATP + H2O + 4 H(+)(in) = ADP + phosphate + 5 H(+)(out). Produces ATP from ADP in the presence of a proton gradient across the membrane. The alpha chain is a regulatory subunit. The sequence is that of ATP synthase subunit alpha from Parasynechococcus marenigrum (strain WH8102).